The chain runs to 573 residues: 60 kDa heat shock protein, mitochondrial (573 aa).

A mitochondrion-targeting transit peptide spans 1–26 (MLRLPTVLRQMRPVSRALAPHLTRAY). Lys-31 bears the N6-succinyllysine mark. 2 positions are modified to phosphoserine: Ser-67 and Ser-70. Lys-75 provides a ligand contact to ATP. N6-acetyllysine is present on Lys-75. Lys-82 bears the N6-acetyllysine; alternate mark. Position 82 is an N6-succinyllysine; alternate (Lys-82). Residue Lys-87 is modified to N6-acetyllysine. A Phosphotyrosine modification is found at Tyr-90. At Lys-91 the chain carries N6-acetyllysine. Position 111 to 115 (111 to 115 (DGTTT)) interacts with ATP. The residue at position 125 (Lys-125) is an N6-acetyllysine; alternate. Lys-125 carries the post-translational modification N6-succinyllysine; alternate. Position 130 is an N6-acetyllysine (Lys-130). N6-acetyllysine; alternate is present on Lys-133. Lys-133 carries the post-translational modification N6-succinyllysine; alternate. Position 133 is an N6-malonyllysine; alternate (Lys-133). Lys-156 is modified (N6-acetyllysine). Lys-191, Lys-202, Lys-205, Lys-218, and Lys-236 each carry N6-acetyllysine; alternate. An N6-succinyllysine; alternate mark is found at Lys-191, Lys-202, Lys-205, Lys-218, and Lys-236. An N6-acetyllysine modification is found at Lys-249. The residue at position 250 (Lys-250) is an N6-acetyllysine; alternate. Lys-250 is subject to N6-succinyllysine; alternate. An N6-acetyllysine mark is found at Lys-269 and Lys-292. N6-succinyllysine is present on Lys-301. N6-acetyllysine is present on Lys-314. Lys-352 is subject to N6-acetyllysine; alternate. Lys-352 is modified (N6-succinyllysine; alternate). An N6-acetyllysine mark is found at Lys-359 and Lys-389. Lys-396 carries the N6-acetyllysine; alternate modification. An N6-succinyllysine; alternate modification is found at Lys-396. A Phosphoserine modification is found at Ser-410. Residue Gly-440 coordinates ATP. N6-acetyllysine; alternate is present on Lys-455. Lys-455 is modified (N6-succinyllysine; alternate). Lys-469 carries the post-translational modification N6-acetyllysine. Position 481 is an N6-acetyllysine; alternate (Lys-481). Position 481 is an N6-succinyllysine; alternate (Lys-481). At Ser-488 the chain carries Phosphoserine. Asp-520 is an ATP binding site. Lys-551 is covalently cross-linked (Glycyl lysine isopeptide (Lys-Gly) (interchain with G-Cter in SUMO2)).

This sequence belongs to the chaperonin (HSP60) family. In terms of assembly, homoheptamer arranged in a ring structure. The functional units of these chaperonins consist of heptameric rings of the large subunit Hsp60, which function as a back-to-back double ring. Interacts with 2 heptameric Hsp10 rings to form the symmetrical football complex. Interacts with HRAS. Interacts with ATAD3A. Interacts with ETFBKMT and EEF1AKMT3. Interacts with MFHAS1.

Its subcellular location is the mitochondrion matrix. The catalysed reaction is ATP + H2O + a folded polypeptide = ADP + phosphate + an unfolded polypeptide.. Chaperonin implicated in mitochondrial protein import and macromolecular assembly. Together with Hsp10, facilitates the correct folding of imported proteins. May also prevent misfolding and promote the refolding and proper assembly of unfolded polypeptides generated under stress conditions in the mitochondrial matrix. The functional units of these chaperonins consist of heptameric rings of the large subunit Hsp60, which function as a back-to-back double ring. In a cyclic reaction, Hsp60 ring complexes bind one unfolded substrate protein per ring, followed by the binding of ATP and association with 2 heptameric rings of the co-chaperonin Hsp10. This leads to sequestration of the substrate protein in the inner cavity of Hsp60 where, for a certain period of time, it can fold undisturbed by other cell components. Synchronous hydrolysis of ATP in all Hsp60 subunits results in the dissociation of the chaperonin rings and the release of ADP and the folded substrate protein. This Rattus norvegicus (Rat) protein is 60 kDa heat shock protein, mitochondrial (Hspd1).